Consider the following 408-residue polypeptide: Imidazolonepropionase (408 aa).

Fe(3+) contacts are provided by His-73 and His-75. 2 residues coordinate Zn(2+): His-73 and His-75. The 4-imidazolone-5-propanoate site is built by Arg-82, Tyr-145, and His-178. Tyr-145 contacts N-formimidoyl-L-glutamate. His-243 serves as a coordination point for Fe(3+). His-243 contacts Zn(2+). Gln-246 serves as a coordination point for 4-imidazolone-5-propanoate. Position 318 (Asp-318) interacts with Fe(3+). Asp-318 provides a ligand contact to Zn(2+). N-formimidoyl-L-glutamate-binding residues include Asn-320 and Gly-322. Ser-323 is a 4-imidazolone-5-propanoate binding site.

Belongs to the metallo-dependent hydrolases superfamily. HutI family. It depends on Zn(2+) as a cofactor. Fe(3+) serves as cofactor.

The protein resides in the cytoplasm. The enzyme catalyses 4-imidazolone-5-propanoate + H2O = N-formimidoyl-L-glutamate. Its pathway is amino-acid degradation; L-histidine degradation into L-glutamate; N-formimidoyl-L-glutamate from L-histidine: step 3/3. Catalyzes the hydrolytic cleavage of the carbon-nitrogen bond in imidazolone-5-propanoate to yield N-formimidoyl-L-glutamate. It is the third step in the universal histidine degradation pathway. In Shewanella sediminis (strain HAW-EB3), this protein is Imidazolonepropionase.